We begin with the raw amino-acid sequence, 145 residues long: D-aminoacyl-tRNA deacylase (145 aa).

A Gly-cisPro motif, important for rejection of L-amino acids motif is present at residues 137–138 (GP).

It belongs to the DTD family. In terms of assembly, homodimer.

The protein localises to the cytoplasm. The enzyme catalyses glycyl-tRNA(Ala) + H2O = tRNA(Ala) + glycine + H(+). It carries out the reaction a D-aminoacyl-tRNA + H2O = a tRNA + a D-alpha-amino acid + H(+). An aminoacyl-tRNA editing enzyme that deacylates mischarged D-aminoacyl-tRNAs. Also deacylates mischarged glycyl-tRNA(Ala), protecting cells against glycine mischarging by AlaRS. Acts via tRNA-based rather than protein-based catalysis; rejects L-amino acids rather than detecting D-amino acids in the active site. By recycling D-aminoacyl-tRNA to D-amino acids and free tRNA molecules, this enzyme counteracts the toxicity associated with the formation of D-aminoacyl-tRNA entities in vivo and helps enforce protein L-homochirality. The chain is D-aminoacyl-tRNA deacylase from Lactobacillus gasseri (strain ATCC 33323 / DSM 20243 / BCRC 14619 / CIP 102991 / JCM 1131 / KCTC 3163 / NCIMB 11718 / NCTC 13722 / AM63).